The chain runs to 315 residues: Ribosomal protein L11 methyltransferase (315 aa).

The S-adenosyl-L-methionine site is built by T161, G182, D204, and N248.

Belongs to the methyltransferase superfamily. PrmA family.

The protein localises to the cytoplasm. The catalysed reaction is L-lysyl-[protein] + 3 S-adenosyl-L-methionine = N(6),N(6),N(6)-trimethyl-L-lysyl-[protein] + 3 S-adenosyl-L-homocysteine + 3 H(+). Methylates ribosomal protein L11. The sequence is that of Ribosomal protein L11 methyltransferase from Shouchella clausii (strain KSM-K16) (Alkalihalobacillus clausii).